The chain runs to 634 residues: DNA-directed RNA polymerase subunit gamma (634 aa).

Residues Cys-74, Cys-76, Cys-89, and Cys-92 each coordinate Zn(2+). Mg(2+) is bound by residues Asp-471, Asp-473, and Asp-475.

This sequence belongs to the RNA polymerase beta' chain family. RpoC1 subfamily. In cyanobacteria the RNAP catalytic core is composed of 2 alpha, 1 beta, 1 beta', 1 gamma and 1 omega subunit. When a sigma factor is associated with the core the holoenzyme is formed, which can initiate transcription. The cofactor is Mg(2+). Zn(2+) serves as cofactor.

The enzyme catalyses RNA(n) + a ribonucleoside 5'-triphosphate = RNA(n+1) + diphosphate. In terms of biological role, DNA-dependent RNA polymerase catalyzes the transcription of DNA into RNA using the four ribonucleoside triphosphates as substrates. In Prochlorococcus marinus (strain SARG / CCMP1375 / SS120), this protein is DNA-directed RNA polymerase subunit gamma.